Consider the following 622-residue polypeptide: Procollagen galactosyltransferase 1 (622 aa).

Positions 1-29 (MAAAPRAGRRRGQPLLALLLLLLAPLPPG) are cleaved as a signal peptide. Residues N96, N184, and N381 are each glycosylated (N-linked (GlcNAc...) asparagine). Over residues 588 to 606 (RAKSQKMREQQALSREAKN) the composition is skewed to basic and acidic residues. The segment at 588–622 (RAKSQKMREQQALSREAKNSDVLQSPLDSAARDEL) is disordered. An Endoplasmic reticulum retention motif motif is present at residues 619-622 (RDEL).

The protein belongs to the glycosyltransferase 25 family. In terms of processing, N-glycosylated. Ubiquitous with higher levels in placenta, heart, lung and spleen.

The protein localises to the endoplasmic reticulum lumen. It catalyses the reaction (5R)-5-hydroxy-L-lysyl-[collagen] + UDP-alpha-D-galactose = (5R)-5-O-(beta-D-galactosyl)-5-hydroxy-L-lysyl-[collagen] + UDP + H(+). Beta-galactosyltransferase that transfers beta-galactose to hydroxylysine residues of type I collagen. By acting on collagen glycosylation, facilitates the formation of collagen triple helix. Also involved in the biosynthesis of collagen type IV. The polypeptide is Procollagen galactosyltransferase 1 (COLGALT1) (Homo sapiens (Human)).